The following is a 406-amino-acid chain: Imidazolonepropionase (406 aa).

2 residues coordinate Fe(3+): His-65 and His-67. Zn(2+) contacts are provided by His-65 and His-67. 4-imidazolone-5-propanoate is bound by residues Arg-74, Tyr-137, and His-170. Residue Tyr-137 coordinates N-formimidoyl-L-glutamate. Residue His-235 coordinates Fe(3+). Residue His-235 participates in Zn(2+) binding. Gln-238 is a 4-imidazolone-5-propanoate binding site. A Fe(3+)-binding site is contributed by Asp-310. Asp-310 provides a ligand contact to Zn(2+). The N-formimidoyl-L-glutamate site is built by Asn-312 and Gly-314. A 4-imidazolone-5-propanoate-binding site is contributed by Thr-315.

It belongs to the metallo-dependent hydrolases superfamily. HutI family. The cofactor is Zn(2+). Requires Fe(3+) as cofactor.

It is found in the cytoplasm. The enzyme catalyses 4-imidazolone-5-propanoate + H2O = N-formimidoyl-L-glutamate. It functions in the pathway amino-acid degradation; L-histidine degradation into L-glutamate; N-formimidoyl-L-glutamate from L-histidine: step 3/3. Functionally, catalyzes the hydrolytic cleavage of the carbon-nitrogen bond in imidazolone-5-propanoate to yield N-formimidoyl-L-glutamate. It is the third step in the universal histidine degradation pathway. This Vibrio vulnificus (strain CMCP6) protein is Imidazolonepropionase.